Here is a 70-residue protein sequence, read N- to C-terminus: Brevinin-1Vb (70 aa).

Residues 1–22 (MFTLKKSLLLLFFLGTINLSLC) form the signal peptide. Residues 23–44 (EEERNAEEERRDEPDEMNVEVE) constitute a propeptide that is removed on maturation. A disulfide bridge links C64 with C70.

Expressed by the skin glands.

It is found in the secreted. Antimicrobial peptide. The polypeptide is Brevinin-1Vb (Odorrana versabilis (Chinese bamboo leaf odorous frog)).